Reading from the N-terminus, the 335-residue chain is Anthranilate phosphoribosyltransferase (335 aa).

Residues G79, 82 to 83 (GD), S87, 89 to 92 (NIST), 107 to 115 (KHGNRSITS), and S119 each bind 5-phospho-alpha-D-ribose 1-diphosphate. Residue G79 participates in anthranilate binding. Mg(2+) is bound at residue S91. Residue N110 coordinates anthranilate. R165 is an anthranilate binding site. Residues D224 and E225 each coordinate Mg(2+).

The protein belongs to the anthranilate phosphoribosyltransferase family. As to quaternary structure, homodimer. Requires Mg(2+) as cofactor.

It catalyses the reaction N-(5-phospho-beta-D-ribosyl)anthranilate + diphosphate = 5-phospho-alpha-D-ribose 1-diphosphate + anthranilate. The protein operates within amino-acid biosynthesis; L-tryptophan biosynthesis; L-tryptophan from chorismate: step 2/5. In terms of biological role, catalyzes the transfer of the phosphoribosyl group of 5-phosphorylribose-1-pyrophosphate (PRPP) to anthranilate to yield N-(5'-phosphoribosyl)-anthranilate (PRA). In Lactococcus lactis subsp. cremoris (strain SK11), this protein is Anthranilate phosphoribosyltransferase.